The sequence spans 617 residues: uncharacterized protein (617 aa).

Residues 387–396 show a composition bias toward polar residues; that stretch reads NGGMSATQLP. 2 disordered regions span residues 387–419 and 443–599; these read NGGM…HAAP and YDDF…NNEQ. A compositionally biased stretch (low complexity) spans 404–414; the sequence is RQAAANQFQQR. Polar residues predominate over residues 453-474; it reads QPLTQQQKDAARQRYQSASPEQ. Basic and acidic residues-rich tracts occupy residues 490–499 and 522–531; these read QRREAARERI and QRRDAARERI. Polar residues predominate over residues 549–570; sequence RPLNQQQRDNARQRVQSASPEQ. The span at 572–585 shows a compositional bias: basic and acidic residues; the sequence is QVFREKVQESRPQR. Residues 586-599 show a composition bias toward polar residues; sequence LNDSNHTVRLNNEQ.

This is an uncharacterized protein from Escherichia coli (strain K12).